Here is a 6548-residue protein sequence, read N- to C-terminus: MNGQAPPHDVVVANGTEKFIVPKIKKNQLGASTPSRPQAEAALPTTARSIAGVYVEASGQTQSIYAAIKQGLLPTGLGLTLLEAQAATGGLVDLAQGQLLPVSEALRRGLVGLELKEKLLAAERAVTGYPDPYGGEKLSLFQAIKKEVVDRTLGWRLLEAQLATGGLVDPTQGVQVAPELACQQGLLDKETWLSLVESEPSMGTPGFSDPNTLEQLPYSVLLGRCVQDPSSGLPLLPLKTTFHTLAGAASASMLLEAGVLNEEMVRDLQEGMLVVSDVGTRPEVRRYLEGTGGLAGVVLLPGGHKKSFFQATVEHLVSKGIALQLLEAQAATRTLVHPTTGQRLWVEEAVKAGLVGPELHEQLLVAEQAVTGYYDPFSSSRIPVFQAMKKGLVDQPLALRLLDAQLATGGLICPARRFRLPLEAALRFGCLDEETRQRLSQAMGFSDPTTHDRLGYEQLLALSVTDPETGLAFLPLPGMSHANEPQGPTFIDHCTRQALSKATTSISVGRYQGRPVSLWELLFSESVPVKKRAMLAQRHQEGALSVEELAAELKNIVEQAAATAKVTFAGLRDTVTPGELLKAEIINQDLFEQLERGQTSAQDVGSLDSVQRYLQGTGSIAGLLLPDSQERLSIYEARSKGLLRPGTALILLEAQAATGFIIDPKENKRYSVEEALRAGVIGPDVYAKLLSAEHAVTGYTDPYSGEQISLFQAMQRDLIVRDHGIRLLEAQIATGGVIDPVHSHRVPVDVAYQRGYFDQILNSILLDPSDDTKGFFDPNTHENLTYLQLLERCVHDSETGLHLLPLSSTRPQLVDSSTRQAFQKLLLSVKYGRFRGQRVSAWELVNSEYFTEDRRRQLLQRYRQRKITLEQVTQLLEKEMRRWTDITLPALQGQVTAYQLLEAHIINQELLDQVLTGTISPDALLQVGDVHRYLRGSGTVGGVLLKPSNQRISLYQAMKQKLLPPSTALALLEAQAATGTITDPCSMETLSVDEAVCRGVVGAEVYGKLKRAEHSITGYRDPFSGKKVSLFRAMKKGLVPVEQATRLLEAQVSTGGVVDPTTHLHLPMPVAVQRGCIDREMEAALSRSPETFPTPDGRGHTSYAQLLEHCLQDKASGLHLLPLTEDAPNVPTDTQIQETLQASAGTEDGLSLWDLLTSCHFTEEQRRGYLEDVKVGKISVPQLQNTVRSWVHSAKLLARARITVPGPRGEVPATWLRDAGIITQETLEALAQGMQSPDEVAKQPTVKVCLWGTGCVAGVLLQPSGTKLSIAQAVRDGLLPTGLGQQLLEAQVASGFLVNPLTNQRLSVEGAVKAGLVGMEQSEHLRQVEKAVTGYSDPFSGGSLSLWQAMEKGLVTQSEAFPLLQVQLATGGVVDPVHGVHLPQEVAYKLGLLDEQTSRVLTATGKENKLFFDPNSREKVTYQQLRELCVLDADTGLWLLPLPQGTVLEVDDHTAVALRAMKVPINMGRFQGHSVSLWDLLHSEYVGAEKRRELVALCCSGRAAALRQVIGMLTTLVEAAEKQPSQATFKGLRKQVSAGDLFRSQLITKQTLDELNQGKRTVQEVTEMDSVRRSLEGGNFIAGVLIQDTKEKMSIPEALRRHILRPGTALVLLEAQAATGFIIDPVENRKLTVEQAFQAGMFGKETYMKLLSAERAVTGYTDPYTGEQISLFQAMQRDLIVRDHGIRLLEAQIATGGIIDPVHSHRVPVDVAYQRGYFNEEMNRILSDPSDDTKGFFDPNTHENLTYLQLLERCVEDPETGLYMLEIVKKGETYTYIDEATRQALTSRTVKMYVGKFAGQTVSVWDLLSSQYFTEGRRRKLLREYRAQNIGLENLLEVITSTVEETEKQSQIFKVPGIHGDVTAAELFNSGILNKKTLDALRSGDRGFQDLRWLEDVRVYLEGSNYIAGVIAPLTQKVMSFYEASREELIPAGFAAQMLEAQAATGYLMDPCTNQRLCVDEAIAAGLVGEDLRERLVNAEMAAKGYKDPATGETIPLYQAMERKLVGREEALRLLEVQVATGGVIDPRHHHRVPLDTACQRGCMCDDSLVLIADQKHMRKRFVDPNTQEKVTYQELQDRCQREEKSGWALFPVVKDKKDIEYVDEATKRALEAEQVEVTVGRYRGQRRSVWELLNSEYVSEEKKMELVRLYKEDTTRALQKVVELILQMIADKERRSRQLWFRGLRTQVTAEELLRSEVITKQTLEDLEEGRTTVDQIERKEDVKRYLKGTSCIAGVLVPVQGEPGRQEKMSIYQAMWKGVLRPGTALVLLEAQAATGFIIDPVNNRRLSVEEAVAAGVVGGEIQEKLLSAERAVTGYTDPYTGDQISLFQAMQRDLIVRDHGIRLLEAQIATGGVIDPVHSHRVPVDVAYQRGYFDEDMNSILADPGDDTKGFFDPNTHENLTYLQLLRRCVRDPETGFYMLQLAGKGSSVHHLSEELRRALREARVTPGTGDFQGQSISVWELLFYREVPESLRQDLLRCYQAGGLTVHDVTTTLTSLLARAKDGSPRGDPQGALGKATMEVKRGHLRGHEVPVWDILTSNYVSRDTRKELLAQFSSGSLTLPMLKRRLTTIIEEAEETQESKPKPRDASLKQQDTGARGSGTSPDEGDAQDSSESARQQQEQTLRATTMQVHRGQFRDQQVSVWKVLFSSYLSETRREELLAQHLAGKLGVMELVSLLTQIIEETEERLSKVSFPGLRRQVSASELCTSGILDRDTMRELAQGTKTIHEVTEMDSVKRYLGGSSCIAGVLVPVQGEPGRQEKMSIYQAMWKGVLRPGTALVLLEAQAATGFIIDPVNNRRLSVEEAVAAGVVGGEIQEKLLSAERAVTGYTDPYTGDQISLFQAMQRDLIVRDHGIRLLEAQIATGGVIDPVHSHRVPVDVAYQRGYFDEDMNSILADPGDDTKGFFDPNTHENLTYLQLLRRCVRDPETGFYMLQLAGKGSSVHHLSEELRRALREARVTPGTGDFQGQSISVWELLFYREVPESLRQDLLRRYQAGGLTVHDVTTTLTSLLARAKDGSPRXDPQGALGKATMEVKRGHLRGHXVPVWDILTSNYVSRDTRKELLAQFSSGSLTLPMLKRRLTTIIEEAEETQESKPKPRDASLKQQDTGARGSGTSPDEGDAQDSSESARQQQEQTLRATTMQVHRGQFRDQQVSVWKVLFSSYLSETRREELLAQHLAGKLGVMELVSLLTQIIEETEERLSKVSFPGLRRQVSASELCTSGILDRDTMRELAQGTKTIHEVTEMDSVKRYLGGSSCIAGVLVPVQGEPGRQEKMSIYQAMWKGVLRPGTALVLLEAQAATGFIIDPVNNRRLSVEEAVAAGVVGGEIQEKLLSAERAVTGYTDPYTGDQISLFQAMQRDLIVRDHGIRLLEAQIATGGVIDPVHSHRVPVDVAYQRGYFDEDMNSILADPGDDTKGFFDPNTHENLTYLQLLRRCVRDPETGFYMLQLAGKGSSVHHLSEELRRALREARVTPGTGDFQGQSISVWELLFYREVPESLRQDLLRRYQAGGLTVHDVTTTLTSLLARAKDGSPRXDPQGALGKATMEVKRGHLRGHXVPVWDILTSNYVSRDTRKELLAQFSSGSLTLPMLKRRLTTIIEEAEETQESKPKPRDASLKQQDTGARGSGTSPDEGDAQDSSESARQQQEQTLRATTMQVHRGQFRDQQVSVWKVLFSSYLSETRREELLAQHLAGKLGVMELVSLLTQIIEETEERLSKVSFPGLRRQVSASELCTSGILDRDTMRELAQGTKTIHEVTEMDSVKRYLGGSSCIAGVLVPVQGEPGRQEKMSIYQAMWKGVLRPGTALVLLEAQAATGFIIDPVNNRRLSVEEAVAAGVVGGEIQEKLLSAERAVTGYTDPYTGDQISLFQAMQRDLIVRDHGIRLLEAQIATGGVIDPVHSHRVPVDVAYQRGYFDEDMNSILADPGDDTKGFFDPNTHENLTYLQLLRRCVRDPETGFYMLQLAGKGSSVHHLSEELRRALREARVTPGTGDFQGQSISVWELLFYREVPESLRQDLLRRYQAGGLTVHDVTTTLTSLLARAKDGSPRXDPQGALGKATMEVKRGHLRGHXVPVWDILTSNYVSRDTRKELLAQFSSGSLTLPMLKRRLTTIIEEAEETQESKPKPRDASLKQQDTGARGSGTSPDEGDAQDSSESARQQQEQTLRATTMQVHRGQFRDQQVSVWKVLFSSYLSETRREELLAQHLAGKLGVMELVSLLTQIIEETEERLSKVSFPGLRRQVSASELCTSGILDRDTMRELAQGTKTIHEVTEMDSVKRYLGGSSCIAGVLVPVQGEPGRQEKMSIYQAMWKGVLRPGTALVLLEAQAATGFIIDPVNNRRLSVEEAVAAGVVGGEIQEKLLSAERAVTGYTDPYTGDQISLFQAMQRDLIVRDHGIRLLEAQIATGGVIDPVHSHRVPVDVAYQRGYFDEDMNSILADPGDDTKGFFDPNTHENLTYLQLLRRCVRDPETGFYMLQLAGKGSSVHHLSEELRRALREARVTPGTGDFQGQSISVWELLFYREVPESLRQDLLRRYQAGGLTVHDVTTTLTSLLARAKDGSPRXDPQGALGKATMEVKRGHLRGHXVPVWDILTSNYVSRDTRKELLAQFSSGSLTLPMLKRRLTTIIEEAEETQESKPKPRDASLKQQDTGARGSGTSPDEGDAQDSSESARQQQEQTLRATTMQVHRGQFRDQQVSVWKVLFSSYLSETRREELLAQHLAGKLGVMELVSLLTQIIEETEERLSKVSFPGLRRQVSASELCTSGILDRDTMRELAQGTKTIHEVTEMDSVKRYLGGSSCIAGVLVPVQGEPGRQEKMSIYQAMWKGVLRPGTALVLLEAQAATGFIIDPVNNRRLSVEEAVAAGVVGGEIQEKLLSAERAVTGYTDPYTGDQISLFQAMQRDLIVRDHGIRLLEAQIATGGVIDPVHSHRVPVDVAYQRGYFDEDMNSILADPGDDTKGFFDPNTHENLTYLQLLRRCVRDPETGFYMLQLAGKGSSVHHLSEELRRALREARVTPGTGDFQGQSISVWELLFYREVPESLRQDLLRRYQAGGLTVHDVTTTLTSLLARAKDGSPRXDPQGALGKATMEVKRGHLRGHXVPVWDILTSNYVSRDTRKELLAQFSSGSLTLPMLKRRLTTIIEEAEETQESKPKPRDASLKQQDTGARGSGTSPDEGDAQDSSESARQQQEQTLRATTMQVHRGQFRDQQVSVWKVLFSSYLSETRREELLAQHLAGKLGVMELVSLLTQIIEETEERLSKVSFPGLRRQVSASELCTSGILDRDTMRELAQGTKTIHEVTEMDSVKRYLGGSSCIAGVLVPVQGEPGRQEKMSIYQAMWKGVLRPGTALVLLEAQAATGFIIDPVNNRRLSVEEAVAAGVVGGEIQEKLLSAERAVTGYTDPYTGDQISLFQAMQRDLIVRDHGIRLLEAQIATGGVIDPVHSHRVPVDVAYQRGYFDEDMNSILADPGDDTKGFFDPNTHENLTYLQLLRRCVRDPETGFYMLQLAGKGSSVHHLSEELRRALREARVTPGTGDFQGQSISVWELLFYREVPESLRQDLLRRYQAGGLTVHDVTTTLTSLLARAKDGSPRXDPQGALGKATMEVKRGHLRGHXVPVWDILTSNYVSRDTRKELLAQFSSGSLTLPMLKRRLTTIIEEAEETQESKPKPRDASLKQQDTGARGSGTSPDEGDAQDSSESARQQQEQTLRATTMQVHRGQFRDQQVSVWKVLFSSYLSETRREELLAQHLAGKLGVMELVSLLTQIIEETEERLSKVSFPGLRRQVSASELCTSGILDRDTMRELAQGTKTIHEVTEMDSVKRYLGGSSCIAGVLVPVQGEPGRQEKMSIYQAMWKGVLRPGTALVLLEAQAATGFIIDPVNNRRLSVEEAVAAGVVGGEIQEKLLSAERAVTGYTDPYTGDQISLFQAMQRDLIVRDHGIRLLEAQIATGGVIDPVHSHRVPVDVAYQRGYFDEDMNSILADPGDDTKGFFDPNTHENLTYLQLLRRCVRDPETGFYMLQLAGKGSSVHHLSEELRRALREARVTPGTGDFQGQSISVWELLFYREVPESLRQDLLRRYQAGGLTVHDVTTTLTSLLARAKDGSPREDPQGALGKATMEVKRGHLRGHVVPVWDILTSNYVSRDTRKELLAQFSSGSLTLPMLKRRLTTIIEEAEETQESKPKPRDASLKQQDTGARGSGTSPDEGDAQDSSESARQQQEQTLRATTMQVHRGQFRDQQVSVWKVLFSSYLSETRREELLAQHLAGKLGVMELVSLLTQIIEETEERLSKVSFPGLRRQVSASELCTSGILDRDTMRELAQGTKTIHEVTEMDSVKRYLGGSSCIAGVLVPVQGEPGRQEKMSIYQAMWKGVLRPGTALVLLEAQAATGFIIDPVNNRRLSVEEAVAAGVVGGEIQEKLLSAERAVTGYTDPYTGDQISLFQAMQRDLIVKNHGIRLLEAQIATGGVIDPVHSHRVPVDVAYQRGYFDQEMNSILADPGDDTKGFFDPNTHENLTYLQLLQRATIDPETGLLFLSLSKG.

T33 carries the post-translational modification Phosphothreonine. 9 Plectin repeats span residues 41-78, 79-116, 117-154, 155-192, 285-322, 323-360, 362-398, 399-436, and 437-470; these read AALP…TGLG, LTLL…LELK, EKLL…RTLG, WRLL…KETW, RRYL…KGIA, LQLL…PELH, QLLV…QPLA, LRLL…EETR, and QRLS…PETG. The tract at residues 49 to 1123 is interaction with KRT5; it reads SIAGVYVEAS…KASGLHLLPL (1075 aa). Positions 545–565 form a coiled coil; that stretch reads SVEELAAELKNIVEQAAATAK. Plectin repeat units lie at residues 611–648, 649–686, 687–724, 725–762, and 766–800; these read QRYL…PGTA, LILL…PDVY, AKLL…RDHG, IRLL…QILN, and LDPS…SETG. Positions 851–886 form a coiled coil; sequence TEDRRRQLLQRYRQRKITLEQVTQLLEKEMRRWTDI. Plectin repeat units follow at residues 931–968, 969–1006, 1007–1044, 1224–1284, 1285–1322, 1323–1360, 1361–1398, and 1402–1436; these read HRYL…PSTA, LALL…AEVY, GKLK…VEQA, QETL…TGLG, QQLL…MEQS, EHLR…QSEA, FPLL…EQTS, and TATG…ADTG. At T1551 the chain carries Phosphothreonine. Plectin repeat units lie at residues 1572–1609, 1610–1647, 1648–1685, 1686–1723, and 1727–1761; these read RRSL…PGTA, LVLL…KETY, MKLL…RDHG, IRLL…EEMN, and SDPS…PETG. Residues 1580–6545 form an interaction with KRT5 region; sequence FIAGVLIQDT…PETGLLFLSL (4966 aa). Residues 1819–1851 are a coiled coil; it reads RKLLREYRAQNIGLENLLEVITSTVEETEKQSQ. 9 Plectin repeats span residues 1898 to 1935, 1936 to 1973, 1974 to 2011, 2012 to 2049, 2225 to 2267, 2268 to 2305, 2306 to 2343, 2344 to 2381, and 2385 to 2419; these read RVYL…AGFA, AQML…EDLR, ERLV…REEA, LRLL…DDSL, KRYL…PGTA, LVLL…GEIQ, EKLL…RDHG, IRLL…EDMN, and ADPG…PETG. A phosphoserine mark is found at S2430 and S2508. A disordered region spans residues 2578–2626; the sequence is AEETQESKPKPRDASLKQQDTGARGSGTSPDEGDAQDSSESARQQQEQT. The segment covering 2582-2592 has biased composition (basic and acidic residues); sequence QESKPKPRDAS. Composition is skewed to polar residues over residues 2593–2606 and 2615–2626; these read LKQQ…SGTS and SSESARQQQEQT. Plectin repeat units lie at residues 2740 to 2782, 2783 to 2820, 2821 to 2858, 2859 to 2896, and 2900 to 2934; these read KRYL…PGTA, LVLL…GEIQ, EKLL…RDHG, IRLL…EDMN, and ADPG…PETG. Positions 2748–2940 are interaction with KRT14; sequence CIAGVLVPVQ…PETGFYMLQL (193 aa). The interval 3093–3144 is disordered; the sequence is AEETQESKPKPRDASLKQQDTGARGSGTSPDEGDAQDSSESARQQQEQTLRA. Residues 3097-3107 are compositionally biased toward basic and acidic residues; the sequence is QESKPKPRDAS. Polar residues-rich tracts occupy residues 3108–3121 and 3130–3144; these read LKQQ…SGTS and SSES…TLRA. S3220 is subject to Phosphoserine. Plectin repeat units lie at residues 3255–3297, 3298–3335, 3336–3373, 3374–3411, and 3415–3449; these read KRYL…PGTA, LVLL…GEIQ, EKLL…RDHG, IRLL…EDMN, and ADPG…PETG. Phosphoserine occurs at positions 3460 and 3538. Positions 3608 to 3659 are disordered; that stretch reads AEETQESKPKPRDASLKQQDTGARGSGTSPDEGDAQDSSESARQQQEQTLRA. Over residues 3612 to 3622 the composition is skewed to basic and acidic residues; the sequence is QESKPKPRDAS. Composition is skewed to polar residues over residues 3623–3636 and 3645–3659; these read LKQQ…SGTS and SSES…TLRA. Phosphoserine is present on S3735. Plectin repeat units lie at residues 3770–3812, 3813–3850, 3851–3888, 3889–3926, and 3930–3964; these read KRYL…PGTA, LVLL…GEIQ, EKLL…RDHG, IRLL…EDMN, and ADPG…PETG. Phosphoserine is present on residues S3975 and S4053. The segment at 4123-4174 is disordered; sequence AEETQESKPKPRDASLKQQDTGARGSGTSPDEGDAQDSSESARQQQEQTLRA. The segment covering 4127–4137 has biased composition (basic and acidic residues); sequence QESKPKPRDAS. Polar residues-rich tracts occupy residues 4138–4151 and 4160–4174; these read LKQQ…SGTS and SSES…TLRA. Plectin repeat units lie at residues 4285–4327, 4328–4365, 4366–4403, 4404–4441, and 4445–4479; these read KRYL…PGTA, LVLL…GEIQ, EKLL…RDHG, IRLL…EDMN, and ADPG…PETG. Residues 4638–4689 are disordered; the sequence is AEETQESKPKPRDASLKQQDTGARGSGTSPDEGDAQDSSESARQQQEQTLRA. Residues 4642–4652 are compositionally biased toward basic and acidic residues; sequence QESKPKPRDAS. 2 stretches are compositionally biased toward polar residues: residues 4653-4666 and 4675-4689; these read LKQQ…SGTS and SSES…TLRA. S4765 carries the phosphoserine modification. Plectin repeat units follow at residues 4800 to 4842, 4843 to 4880, 4881 to 4918, 4919 to 4956, and 4960 to 4994; these read KRYL…PGTA, LVLL…GEIQ, EKLL…RDHG, IRLL…EDMN, and ADPG…PETG. A phosphoserine mark is found at S5005 and S5083. The tract at residues 5153-5204 is disordered; sequence AEETQESKPKPRDASLKQQDTGARGSGTSPDEGDAQDSSESARQQQEQTLRA. A compositionally biased stretch (basic and acidic residues) spans 5157-5167; the sequence is QESKPKPRDAS. Composition is skewed to polar residues over residues 5168-5181 and 5190-5204; these read LKQQ…SGTS and SSES…TLRA. Plectin repeat units follow at residues 5315-5357, 5358-5395, 5396-5433, 5434-5471, and 5475-5509; these read KRYL…PGTA, LVLL…GEIQ, EKLL…RDHG, IRLL…EDMN, and ADPG…PETG. A disordered region spans residues 5668 to 5719; sequence AEETQESKPKPRDASLKQQDTGARGSGTSPDEGDAQDSSESARQQQEQTLRA. The segment covering 5672–5682 has biased composition (basic and acidic residues); sequence QESKPKPRDAS. Polar residues-rich tracts occupy residues 5683–5696 and 5705–5719; these read LKQQ…SGTS and SSES…TLRA. S5795 is subject to Phosphoserine. 5 Plectin repeats span residues 5830–5872, 5873–5910, 5911–5948, 5949–5986, and 5990–6024; these read KRYL…PGTA, LVLL…GEIQ, EKLL…RDHG, IRLL…EDMN, and ADPG…PETG. 2 positions are modified to phosphoserine: S6035 and S6113. The disordered stretch occupies residues 6183–6234; that stretch reads AEETQESKPKPRDASLKQQDTGARGSGTSPDEGDAQDSSESARQQQEQTLRA. The segment covering 6187–6197 has biased composition (basic and acidic residues); the sequence is QESKPKPRDAS. 2 stretches are compositionally biased toward polar residues: residues 6198-6211 and 6220-6234; these read LKQQ…SGTS and SSES…TLRA. Position 6310 is a phosphoserine (S6310). 5 Plectin repeats span residues 6345–6387, 6388–6425, 6426–6463, 6464–6501, and 6505–6539; these read KRYL…PGTA, LVLL…GEIQ, EKLL…KNHG, IRLL…QEMN, and ADPG…PETG.

The protein belongs to the plakin or cytolinker family. Interacts with KRT5, KRT14 and KRT5/KRT14 heterotetramer; interacts preferentially with assembled filaments rather than keratin monomers. Interacts with KRT8 and KRT18 and KRT8/KRT18 heterotetramer; interacts preferentially with assembled filaments rather than keratin monomers. Interacts with KRT1, VIM and DES; interaction is stronger with KRT1 than with VIM or DES; interaction is dependent of higher-order structure of intermediate filament. High levels in skin, small intestine and salivary gland. Lower levels in lung, uterus and liver. Not detected in brain, kidney, muscle, heart or spleen. In skin, expressed in all epidermal layers but not in the dermis. In intestine, expressed exclusively in the epithelial cell layer of the villi. In liver, expressed at hepatocyte margins. Around the region of the wound, expressed in the upper half of the epidermis. Weakly expressed on the basilar side of the suprabasal layer of the epidermis at the wound's edge. Expressed strongly in the upper layer of the epidermis, especially in larger keratinocytes. Expressed in undifferentiated primary keratinocytes. Strongly expressed in ductal cells, and also expressed in acinar cells. Expressed in hepatocytes and cholangiocytes.

It is found in the cytoplasm. The protein localises to the cytoskeleton. The protein resides in the apicolateral cell membrane. It localises to the basolateral cell membrane. Its subcellular location is the cell junction. It is found in the hemidesmosome. The protein localises to the tight junction. The protein resides in the cell projection. Its function is as follows. Cytoskeletal linker protein that connects to intermediate filaments and controls their reorganization in response to stress. In response to mechanical stress like wound healing, is associated with the machinery for cellular motility by slowing down keratinocyte migration and proliferation and accelerating keratin bundling in proliferating keratinocytes thus contributing to tissue architecture. However in wound healing in corneal epithelium also positively regulates cell differentiation and proliferation and negatively regulates migration thereby controlling corneal epithelium morphogenesis and integrity. In response to cellular stress, plays a role in keratin filament reorganization, probably by protecting keratin filaments against disruption. During liver and pancreas injuries, plays a protective role by chaperoning disease-induced intermediate filament reorganization. This is Epiplakin from Mus musculus (Mouse).